Here is a 363-residue protein sequence, read N- to C-terminus: NAD(P)H-quinone oxidoreductase subunit 1, chloroplastic (363 aa).

6 helical membrane-spanning segments follow: residues 28–48, 98–118, 127–147, 248–268, 300–320, and 343–363; these read WVLV…LVIV, FSIG…VIPF, LPIG…GLLM, YSGI…LVSS, VFGM…FLFI, and FLLP…LFSL.

This sequence belongs to the complex I subunit 1 family. As to quaternary structure, NDH is composed of at least 16 different subunits, 5 of which are encoded in the nucleus.

Its subcellular location is the plastid. It is found in the chloroplast thylakoid membrane. The catalysed reaction is a plastoquinone + NADH + (n+1) H(+)(in) = a plastoquinol + NAD(+) + n H(+)(out). It catalyses the reaction a plastoquinone + NADPH + (n+1) H(+)(in) = a plastoquinol + NADP(+) + n H(+)(out). Its function is as follows. NDH shuttles electrons from NAD(P)H:plastoquinone, via FMN and iron-sulfur (Fe-S) centers, to quinones in the photosynthetic chain and possibly in a chloroplast respiratory chain. The immediate electron acceptor for the enzyme in this species is believed to be plastoquinone. Couples the redox reaction to proton translocation, and thus conserves the redox energy in a proton gradient. This Cucumis sativus (Cucumber) protein is NAD(P)H-quinone oxidoreductase subunit 1, chloroplastic.